We begin with the raw amino-acid sequence, 396 residues long: Protein RepA (396 aa).

Disordered stretches follow at residues 141–170 and 356–396; these read SKELGKTGGRPRKKDSEEEPEKKPEEVTKK and NQYK…LPTT. Over residues 154-168 the composition is skewed to basic and acidic residues; it reads KDSEEEPEKKPEEVT.

In Bacillus subtilis, this protein is Protein RepA (repA).